The chain runs to 625 residues: Vacuolar-sorting receptor 2 (625 aa).

The first 19 residues, Met-1 to Ser-19, serve as a signal peptide directing secretion. The Lumenal portion of the chain corresponds to Ser-20–Ser-567. Residues Gln-55–Ile-167 form the PA domain. Residues Asn-147, Asn-293, and Asn-433 are each glycosylated (N-linked (GlcNAc...) asparagine). EGF-like domains are found at residues Glu-415–Glu-465 and Gly-468–Lys-515. 7 disulfide bridges follow: Cys-419–Cys-437, Cys-426–Cys-446, Cys-448–Cys-464, Cys-472–Cys-492, Cys-479–Cys-500, Cys-502–Cys-514, and Cys-544–Cys-557. An EGF-like 3; calcium-binding domain is found at Asp-516 to Ile-558. Residues Trp-568–Val-588 form a helical membrane-spanning segment. Over Tyr-589–Leu-625 the chain is Cytoplasmic. The Tyrosine-based internalization motif motif lies at Tyr-608–Leu-611.

The protein belongs to the VSR (BP-80) family. Expressed only in flowers.

The protein resides in the membrane. It localises to the golgi apparatus membrane. It is found in the cytoplasmic vesicle. Its subcellular location is the clathrin-coated vesicle membrane. The protein localises to the prevacuolar compartment membrane. In terms of biological role, vacuolar-sorting receptor (VSR) involved in clathrin-coated vesicles sorting from Golgi apparatus to vacuoles. The chain is Vacuolar-sorting receptor 2 from Arabidopsis thaliana (Mouse-ear cress).